Here is a 347-residue protein sequence, read N- to C-terminus: Phosphate acyltransferase (347 aa).

The protein belongs to the PlsX family. In terms of assembly, homodimer. Probably interacts with PlsY.

Its subcellular location is the cytoplasm. The catalysed reaction is a fatty acyl-[ACP] + phosphate = an acyl phosphate + holo-[ACP]. It functions in the pathway lipid metabolism; phospholipid metabolism. In terms of biological role, catalyzes the reversible formation of acyl-phosphate (acyl-PO(4)) from acyl-[acyl-carrier-protein] (acyl-ACP). This enzyme utilizes acyl-ACP as fatty acyl donor, but not acyl-CoA. This Dehalococcoides mccartyi (strain ATCC BAA-2100 / JCM 16839 / KCTC 5957 / BAV1) protein is Phosphate acyltransferase.